Here is a 248-residue protein sequence, read N- to C-terminus: Probable transcriptional regulatory protein MYPE8020 (248 aa).

Belongs to the TACO1 family.

The protein resides in the cytoplasm. This Malacoplasma penetrans (strain HF-2) (Mycoplasma penetrans) protein is Probable transcriptional regulatory protein MYPE8020.